Consider the following 344-residue polypeptide: Cycloartenol-C-24-methyltransferase 1 (344 aa).

This sequence belongs to the class I-like SAM-binding methyltransferase superfamily. Erg6/SMT family.

It carries out the reaction zymosterol + S-adenosyl-L-methionine = fecosterol + S-adenosyl-L-homocysteine + H(+). It participates in steroid biosynthesis; sterol biosynthesis. In terms of biological role, catalyzes the methyl transfer from S-adenosyl-methionine to the C-24 of cycloartenol to form 24-methylene cycloartenol. In Oryza sativa subsp. japonica (Rice), this protein is Cycloartenol-C-24-methyltransferase 1 (Smt1-1).